Consider the following 94-residue polypeptide: MSISKEEVIKIAKLSRLELKEDEVEFFSAQIKNILEFVNKLNEVKAELLEEEYSDSTPLRKDEPETSLEVDKVLLNAPAKRLNMFEVPKIVDAN.

It belongs to the GatC family. In terms of assembly, heterotrimer of A, B and C subunits.

It carries out the reaction L-glutamyl-tRNA(Gln) + L-glutamine + ATP + H2O = L-glutaminyl-tRNA(Gln) + L-glutamate + ADP + phosphate + H(+). It catalyses the reaction L-aspartyl-tRNA(Asn) + L-glutamine + ATP + H2O = L-asparaginyl-tRNA(Asn) + L-glutamate + ADP + phosphate + 2 H(+). Allows the formation of correctly charged Asn-tRNA(Asn) or Gln-tRNA(Gln) through the transamidation of misacylated Asp-tRNA(Asn) or Glu-tRNA(Gln) in organisms which lack either or both of asparaginyl-tRNA or glutaminyl-tRNA synthetases. The reaction takes place in the presence of glutamine and ATP through an activated phospho-Asp-tRNA(Asn) or phospho-Glu-tRNA(Gln). The chain is Aspartyl/glutamyl-tRNA(Asn/Gln) amidotransferase subunit C from Hydrogenobaculum sp. (strain Y04AAS1).